A 610-amino-acid chain; its full sequence is Serine/threonine-protein kinase RCK2 (610 aa).

2 disordered regions span residues 1 to 55 (MLKI…QDKN) and 99 to 127 (TSVP…SLSE). Residues 11-24 (KKPDQADLSQESKK) show a composition bias toward basic and acidic residues. Residues 31-55 (RSSGTNNKDVSQITSSPKKSFQDKN) are compositionally biased toward polar residues. 2 positions are modified to phosphoserine: serine 46 and serine 50. The Protein kinase domain occupies 163–478 (YKLINKIGEG…IDQFLDDPWL (316 aa)). An ATP-binding site is contributed by 169-177 (IGEGAFSKV). Serine 187 is modified (phosphoserine). Lysine 201 is a binding site for ATP. Aspartate 313 (proton acceptor) is an active-site residue. Position 350 is a phosphothreonine (threonine 350). The interval 493 to 506 (KKAGTSERRHPHKK) is calmodulin-binding. At serine 520 the chain carries Phosphoserine. The interval 541-564 (EDRMGTRGGLGSLAEDEELEDSYS) is disordered.

The protein belongs to the protein kinase superfamily. CAMK Ser/Thr protein kinase family. CaMK subfamily. Post-translationally, autophosphorylated. Phosphorylated by HOG1 at Ser-520 after osmotic stress.

It is found in the cytoplasm. It catalyses the reaction L-seryl-[protein] + ATP = O-phospho-L-seryl-[protein] + ADP + H(+). The enzyme catalyses L-threonyl-[protein] + ATP = O-phospho-L-threonyl-[protein] + ADP + H(+). Activated by Ser-520 phosphorylation by HOG1. Its function is as follows. Serine/threonine-protein kinase involved in a signal transduction pathway that is activated by changes in the osmolarity of the extracellular environment. This is Serine/threonine-protein kinase RCK2 (RCK2) from Saccharomyces cerevisiae (strain ATCC 204508 / S288c) (Baker's yeast).